The following is a 364-amino-acid chain: Chorismate synthase (364 aa).

An NADP(+)-binding site is contributed by Arg-47. FMN-binding positions include 125 to 127 (RFS), Gly-285, 300 to 304 (KPTPS), and Arg-327.

Belongs to the chorismate synthase family. As to quaternary structure, homotetramer. FMNH2 is required as a cofactor.

It carries out the reaction 5-O-(1-carboxyvinyl)-3-phosphoshikimate = chorismate + phosphate. The protein operates within metabolic intermediate biosynthesis; chorismate biosynthesis; chorismate from D-erythrose 4-phosphate and phosphoenolpyruvate: step 7/7. In terms of biological role, catalyzes the anti-1,4-elimination of the C-3 phosphate and the C-6 proR hydrogen from 5-enolpyruvylshikimate-3-phosphate (EPSP) to yield chorismate, which is the branch point compound that serves as the starting substrate for the three terminal pathways of aromatic amino acid biosynthesis. This reaction introduces a second double bond into the aromatic ring system. This is Chorismate synthase from Dehalococcoides mccartyi (strain ATCC BAA-2266 / KCTC 15142 / 195) (Dehalococcoides ethenogenes (strain 195)).